The sequence spans 162 residues: MNETVDLIEMKIPAKPEYVGIIRLTLSGVASRMGYVYEEIEDLKIAVSEACTNAVQHAYKGKDGEDGEVAVRFLVYEDRLEIIVADKGGSFDFKQKQEDLGPYTTAHTVDQLAEGGLGLYLMQTLMDEVEVQANSGVTVAMTKFLNRERVDHDTTIQNYETN.

The protein belongs to the anti-sigma-factor family.

It catalyses the reaction L-seryl-[protein] + ATP = O-phospho-L-seryl-[protein] + ADP + H(+). The catalysed reaction is L-threonyl-[protein] + ATP = O-phospho-L-threonyl-[protein] + ADP + H(+). Functionally, negative regulator of sigma-B activity. Phosphorylates and inactivates its specific antagonist protein, RsbV. Upon phosphorylation of RsbV, RsbW is released and binds to sigma-B, thereby blocking its ability to form an RNA polymerase holoenzyme (E-sigma-B). This Bacillus pumilus (strain SAFR-032) protein is Serine-protein kinase RsbW.